An 867-amino-acid polypeptide reads, in one-letter code: Cadherin-related family member 1 (867 aa).

The first 21 residues, 1–21 (MKHEWNLCPSIFFSIFHICLS), serve as a signal peptide directing secretion. Topologically, residues 22–707 (VQTNYGPYFF…SKDNPMKALG (686 aa)) are extracellular. 6 Cadherin domains span residues 39–138 (NGNM…SPGF), 139–250 (LNTP…PPVF), 251–357 (VGTP…PPTF), 363–476 (PQNR…VPRF), 477–580 (SSEY…SPEF), and 572–692 (DIND…GPMA). The chain crosses the membrane as a helical span at residues 708–728 (VLAGVMAIMVVITIFISTAMF). At 729–867 (WRNKKSNRVM…KNAGSSMSFY (139 aa)) the chain is on the cytoplasmic side. A disordered region spans residues 777 to 825 (EMESGPKNENRNNNYQGIPVPPRAPCPPPPPRLMPKVSKTERSLPTVSG). A compositionally biased stretch (pro residues) spans 795–809 (PVPPRAPCPPPPPRL).

As to expression, expressed in photoreceptor cells of the outer nuclear layer of the retina and in the pinal gland.

It localises to the membrane. Its function is as follows. Potential calcium-dependent cell-adhesion protein. The polypeptide is Cadherin-related family member 1 (cdhr1) (Xenopus laevis (African clawed frog)).